A 221-amino-acid chain; its full sequence is MYKILIADDHPLFREAIHNVITDGFPGSEVMETADLDSALSLTGQHDDLDLILLDLNMPGMHGLGGLINLRNEAPTIPVVIVSAEQDKQVVLQAITYGAVGFITKSSPRSQMTDAIEQILNGNVYLPPDIIRTQKSTGRRNQSEHAGFAPELLQALTRKQLLVLERMTKGESNKQIAYNLDIAETTVKAHVSAILRKLNVHNRVQAILSAGDIDFTAYLRR.

The region spanning 3 to 120 (KILIADDHPL…QMTDAIEQIL (118 aa)) is the Response regulatory domain. Asp55 is modified (4-aspartylphosphate). The 66-residue stretch at 149–214 (APELLQALTR…QAILSAGDID (66 aa)) folds into the HTH luxR-type domain. The segment at residues 173–192 (NKQIAYNLDIAETTVKAHVS) is a DNA-binding region (H-T-H motif).

In terms of biological role, positive activator for glycerol metabolism. Regulates the expression of qedA in a positive manner and governs the expression of ADH I and ADH IIB. General regulator of quinoprotein ethanol oxidation and affects expression of ADH IIG activity but is not the sole regulator. This Pseudomonas putida (Arthrobacter siderocapsulatus) protein is Glycerol metabolism activator.